Consider the following 393-residue polypeptide: Metal tolerance protein C2 (393 aa).

The disordered stretch occupies residues 1-23; that stretch reads MERSISFNPRGDNELPDDRSSDV. Residues 1–113 lie on the Cytoplasmic side of the membrane; that stretch reads MERSISFNPR…VTSGNRQMKR (113 aa). The segment covering 11–21 has biased composition (basic and acidic residues); the sequence is GDNELPDDRSS. The chain crosses the membrane as a helical span at residues 114–134; sequence LFLLIALNVLYSTTELSIGIF. The Vacuolar segment spans residues 135–139; the sequence is TGRVG. Residues 140–160 traverse the membrane as a helical segment; it reads LVSDAFHLTFGCGLLTFSLFA. Topologically, residues 161-186 are cytoplasmic; that stretch reads MATSRKKPDHAYSYGYKRLEVLSAFT. The chain crosses the membrane as a helical span at residues 187-207; that stretch reads NALFLMFMSFSLAVEALHAFI. The Vacuolar segment spans residues 208–214; that stretch reads QDESEHK. A helical membrane pass occupies residues 215-235; the sequence is HYLIVSAVTNLLVNLLGVWFF. At 236 to 259 the chain is on the cytoplasmic side; that stretch reads RNYARVNIAYRKAEDMNYHSVCLH. A helical transmembrane segment spans residues 260–280; the sequence is VISDSIRSAGLILASWLLSLG. Topologically, residues 281 to 283 are vacuolar; it reads VEN. A helical transmembrane segment spans residues 284–304; the sequence is AEVLCLGLVSVTVFMLVMPLF. The Cytoplasmic segment spans residues 305–393; the sequence is KATGGVLLQM…QDLTLQTDYT (89 aa).

It belongs to the cation diffusion facilitator (CDF) transporter (TC 2.A.4) family.

It localises to the vacuole membrane. In terms of biological role, involved in sequestration of excess metal in the cytoplasm into vacuoles to maintain metal homeostasis. This chain is Metal tolerance protein C2 (MTPC2), found in Arabidopsis thaliana (Mouse-ear cress).